The chain runs to 61 residues: uncharacterized protein (61 aa).

Residues 34 to 61 adopt a coiled-coil conformation; that stretch reads TDVEDIDRLISMLDDLEAKYERFKKDWE.

This is an uncharacterized protein from Bacillus subtilis (strain 168).